Reading from the N-terminus, the 121-residue chain is Small ribosomal subunit protein bS16 (121 aa).

The interval 80-121 (AGVREKTERNNPNKAKPGKKAQERAEEKAAKAAEAAEAADAE) is disordered. 2 stretches are compositionally biased toward basic and acidic residues: residues 81–90 (GVREKTERNN) and 99–110 (KAQERAEEKAAK).

Belongs to the bacterial ribosomal protein bS16 family.

The protein is Small ribosomal subunit protein bS16 of Ruegeria sp. (strain TM1040) (Silicibacter sp.).